The primary structure comprises 221 residues: Probable endo-1,4-beta-xylanase B (221 aa).

Positions 1–19 (MVSFSSLALALSTVVGVLA) are cleaved as a signal peptide. Positions 33–221 (QLTHSQTGTK…SSGSATMTVS (189 aa)) constitute a GH11 domain. The Nucleophile role is filled by glutamate 117. The active-site Proton donor is the glutamate 208.

This sequence belongs to the glycosyl hydrolase 11 (cellulase G) family.

Its subcellular location is the secreted. It carries out the reaction Endohydrolysis of (1-&gt;4)-beta-D-xylosidic linkages in xylans.. Its pathway is glycan degradation; xylan degradation. In terms of biological role, endo-1,4-beta-xylanase involved in the hydrolysis of xylan, a major structural heterogeneous polysaccharide found in plant biomass representing the second most abundant polysaccharide in the biosphere, after cellulose. The protein is Probable endo-1,4-beta-xylanase B (xlnB) of Aspergillus clavatus (strain ATCC 1007 / CBS 513.65 / DSM 816 / NCTC 3887 / NRRL 1 / QM 1276 / 107).